Consider the following 558-residue polypeptide: Glucose-6-phosphate isomerase (558 aa).

The active-site Proton donor is Glu-362. Residues His-393 and Lys-523 contribute to the active site.

This sequence belongs to the GPI family.

It is found in the cytoplasm. The enzyme catalyses alpha-D-glucose 6-phosphate = beta-D-fructose 6-phosphate. It functions in the pathway carbohydrate degradation; glycolysis; D-glyceraldehyde 3-phosphate and glycerone phosphate from D-glucose: step 2/4. In Drosophila melanogaster (Fruit fly), this protein is Glucose-6-phosphate isomerase (Pgi).